The chain runs to 150 residues: Protein Smg homolog (150 aa).

It belongs to the Smg family.

The polypeptide is Protein Smg homolog (Methylobacillus flagellatus (strain ATCC 51484 / DSM 6875 / VKM B-1610 / KT)).